A 132-amino-acid chain; its full sequence is Pollen allergen Phl p 6 (132 aa).

The first 22 residues, 1–22 (MVAMFLAVAVVLGLATSPTAEG), serve as a signal peptide directing secretion.

It belongs to the Poa p IX/Phl p VI allergen family.

The sequence is that of Pollen allergen Phl p 6 (PHLPVI) from Phleum pratense (Common timothy).